The sequence spans 691 residues: tRNA-dihydrouridine(47) synthase [NAD(P)(+)]-like (691 aa).

S2 is modified (N-acetylserine). The tract at residues P55 to Q94 is disordered. 2 consecutive C3H1-type zinc fingers follow at residues Q94–E125 and Q138–I163. A disordered region spans residues L259–V286. A compositionally biased stretch (basic and acidic residues) spans E262–K279. FMN is bound by residues P344–T346 and Q398. Catalysis depends on C429, which acts as the Proton donor. FMN-binding positions include K468, H498, N531 to D533, and A556 to R557.

It belongs to the Dus family. Dus3 subfamily. The cofactor is FMN.

The enzyme catalyses 5,6-dihydrouridine(47) in tRNA + NAD(+) = uridine(47) in tRNA + NADH + H(+). The catalysed reaction is 5,6-dihydrouridine(47) in tRNA + NADP(+) = uridine(47) in tRNA + NADPH + H(+). It carries out the reaction a 5,6-dihydrouridine in mRNA + NAD(+) = a uridine in mRNA + NADH + H(+). It catalyses the reaction a 5,6-dihydrouridine in mRNA + NADP(+) = a uridine in mRNA + NADPH + H(+). Its function is as follows. Catalyzes the synthesis of dihydrouridine, a modified base found in the D-loop of most tRNAs. Specifically modifies U47 in cytoplasmic tRNAs. Catalyzes the synthesis of dihydrouridine in some mRNAs, thereby affecting their translation. This chain is tRNA-dihydrouridine(47) synthase [NAD(P)(+)]-like, found in Arabidopsis thaliana (Mouse-ear cress).